We begin with the raw amino-acid sequence, 87 residues long: Protein Tat (87 aa).

The tract at residues 1 to 21 is disordered; it reads MDPVDPNLEPWNHPGSQPRTP. The segment at 1–24 is interaction with human CREBBP; it reads MDPVDPNLEPWNHPGSQPRTPCNK. The interval 1 to 48 is transactivation; the sequence is MDPVDPNLEPWNHPGSQPRTPCNKCYCKKCCYHCQMCFITKGLGISYG. Positions 22, 25, and 27 each coordinate Zn(2+). The interval 22-37 is cysteine-rich; the sequence is CNKCYCKKCCYHCQMC. N6-acetyllysine; by host PCAF is present on Lys28. The Zn(2+) site is built by Cys30, His33, Cys34, and Cys37. The segment at 38 to 48 is core; that stretch reads FITKGLGISYG. The segment at 45–87 is disordered; sequence ISYGRKKRRQRRRPPQGNQAHQDPLPEQPSSQHRGDHPTGPKE. Residues 48–58 show a composition bias toward basic residues; the sequence is GRKKRRQRRRP. Residues 49 to 57 carry the Nuclear localization signal, RNA-binding (TAR), and protein transduction motif; the sequence is RKKRRQRRR. An interaction with the host capping enzyme RNGTT region spans residues 49–87; that stretch reads RKKRRQRRRPPQGNQAHQDPLPEQPSSQHRGDHPTGPKE. Lys50 and Lys51 each carry N6-acetyllysine; by host EP300 and GCN5L2. An asymmetric dimethylarginine; by host PRMT6 mark is found at Arg52 and Arg53. A compositionally biased stretch (basic and acidic residues) spans 77-87; the sequence is HRGDHPTGPKE. The Cell attachment site motif lies at 78 to 80; sequence RGD.

Belongs to the lentiviruses Tat family. Interacts with host CCNT1. Associates with the P-TEFb complex composed at least of Tat, P-TEFb (CDK9 and CCNT1), TAR RNA, RNA Pol II. Recruits the HATs CREBBP, TAF1/TFIID, EP300, PCAF and GCN5L2. Interacts with host KAT5/Tip60; this interaction targets the latter to degradation. Interacts with the host deacetylase SIRT1. Interacts with host capping enzyme RNGTT; this interaction stimulates RNGTT. Binds to host KDR, and to the host integrins ITGAV/ITGB3 and ITGA5/ITGB1. Interacts with host KPNB1/importin beta-1 without previous binding to KPNA1/importin alpha-1. Interacts with EIF2AK2. Interacts with host nucleosome assembly protein NAP1L1; this interaction may be required for the transport of Tat within the nucleus, since the two proteins interact at the nuclear rim. Interacts with host C1QBP/SF2P32; this interaction involves lysine-acetylated Tat. Interacts with the host chemokine receptors CCR2, CCR3 and CXCR4. Interacts with host DPP4/CD26; this interaction may trigger an anti-proliferative effect. Interacts with host LDLR. Interacts with the host extracellular matrix metalloproteinase MMP1. Interacts with host PRMT6; this interaction mediates Tat's methylation. Interacts with, and is ubiquitinated by MDM2/Hdm2. Interacts with host PSMC3 and HTATIP2. Interacts with STAB1; this interaction may overcome SATB1-mediated repression of IL2 and IL2RA (interleukin) in T cells by binding to the same domain than HDAC1. Interacts (when acetylated) with human CDK13, thereby increasing HIV-1 mRNA splicing and promoting the production of the doubly spliced HIV-1 protein Nef. Interacts with host TBP; this interaction modulates the activity of transcriptional pre-initiation complex. Interacts with host RELA. Interacts with host PLSCR1; this interaction negatively regulates Tat transactivation activity by altering its subcellular distribution. Asymmetrical arginine methylation by host PRMT6 seems to diminish the transactivation capacity of Tat and affects the interaction with host CCNT1. In terms of processing, acetylation by EP300, CREBBP, GCN5L2/GCN5 and PCAF regulates the transactivation activity of Tat. EP300-mediated acetylation of Lys-50 promotes dissociation of Tat from the TAR RNA through the competitive binding to PCAF's bromodomain. In addition, the non-acetylated Tat's N-terminus can also interact with PCAF. PCAF-mediated acetylation of Lys-28 enhances Tat's binding to CCNT1. Lys-50 is deacetylated by SIRT1. Post-translationally, polyubiquitination by host MDM2 does not target Tat to degradation, but activates its transactivation function and fosters interaction with CCNT1 and TAR RNA. Phosphorylated by EIF2AK2 on serine and threonine residues adjacent to the basic region important for TAR RNA binding and function. Phosphorylation of Tat by EIF2AK2 is dependent on the prior activation of EIF2AK2 by dsRNA.

The protein resides in the host nucleus. The protein localises to the host nucleolus. It localises to the host cytoplasm. It is found in the secreted. Its function is as follows. Transcriptional activator that increases RNA Pol II processivity, thereby increasing the level of full-length viral transcripts. Recognizes a hairpin structure at the 5'-LTR of the nascent viral mRNAs referred to as the transactivation responsive RNA element (TAR) and recruits the cyclin T1-CDK9 complex (P-TEFb complex) that will in turn hyperphosphorylate the RNA polymerase II to allow efficient elongation. The CDK9 component of P-TEFb and other Tat-activated kinases hyperphosphorylate the C-terminus of RNA Pol II that becomes stabilized and much more processive. Other factors such as HTATSF1/Tat-SF1, SUPT5H/SPT5, and HTATIP2 are also important for Tat's function. Besides its effect on RNA Pol II processivity, Tat induces chromatin remodeling of proviral genes by recruiting the histone acetyltransferases (HATs) CREBBP, EP300 and PCAF to the chromatin. This also contributes to the increase in proviral transcription rate, especially when the provirus integrates in transcriptionally silent region of the host genome. To ensure maximal activation of the LTR, Tat mediates nuclear translocation of NF-kappa-B by interacting with host RELA. Through its interaction with host TBP, Tat may also modulate transcription initiation. Tat can reactivate a latently infected cell by penetrating in it and transactivating its LTR promoter. In the cytoplasm, Tat is thought to act as a translational activator of HIV-1 mRNAs. In terms of biological role, extracellular circulating Tat can be endocytosed by surrounding uninfected cells via the binding to several surface receptors such as CD26, CXCR4, heparan sulfate proteoglycans (HSPG) or LDLR. Neurons are rarely infected, but they internalize Tat via their LDLR. Through its interaction with nuclear HATs, Tat is potentially able to control the acetylation-dependent cellular gene expression. Modulates the expression of many cellular genes involved in cell survival, proliferation or in coding for cytokines or cytokine receptors. Tat plays a role in T-cell and neurons apoptosis. Tat induced neurotoxicity and apoptosis probably contribute to neuroAIDS. Circulating Tat also acts as a chemokine-like and/or growth factor-like molecule that binds to specific receptors on the surface of the cells, affecting many cellular pathways. In the vascular system, Tat binds to ITGAV/ITGB3 and ITGA5/ITGB1 integrins dimers at the surface of endothelial cells and competes with bFGF for heparin-binding sites, leading to an excess of soluble bFGF. The sequence is that of Protein Tat from Homo sapiens (Human).